The sequence spans 195 residues: Large ribosomal subunit protein mL58 (195 aa).

A mitochondrion-targeting transit peptide spans 1 to 18 (MIGRGVCCRSFHTAGSAW).

This sequence belongs to the mitochondrion-specific ribosomal protein mL58 family. In terms of assembly, component of the mitochondrial large ribosomal subunit (mt-LSU). Mature yeast 74S mitochondrial ribosomes consist of a small (37S) and a large (54S) subunit. The 37S small subunit contains a 15S ribosomal RNA (15S mt-rRNA) and 34 different proteins. The 54S large subunit contains a 21S rRNA (21S mt-rRNA) and 46 different proteins.

The protein localises to the mitochondrion. Functionally, component of the mitochondrial ribosome (mitoribosome), a dedicated translation machinery responsible for the synthesis of mitochondrial genome-encoded proteins, including at least some of the essential transmembrane subunits of the mitochondrial respiratory chain. The mitoribosomes are attached to the mitochondrial inner membrane and translation products are cotranslationally integrated into the membrane. This is Large ribosomal subunit protein mL58 (MRPL20) from Saccharomyces cerevisiae (strain ATCC 204508 / S288c) (Baker's yeast).